The chain runs to 314 residues: Protein REGULATOR OF FATTY ACID COMPOSITION 3, chloroplastic (314 aa).

The transit peptide at 1 to 47 (MESLLHASSSLVSLRPRIDGRDSFINPSRVCLNPSLGRRGSKPLPLV) directs the protein to the chloroplast. 2 disordered regions span residues 49–73 (AAKK…ATGP) and 214–314 (AITE…NVGG). Over residues 56–69 (KKDDNHNFSARPDE) the composition is skewed to basic and acidic residues. 2 stretches are compositionally biased toward acidic residues: residues 233–269 (EYYD…DDDG) and 277–294 (GDEE…EQEE). Basic and acidic residues predominate over residues 295–308 (GQDKSTNGRRETRR).

This sequence belongs to the bacterial ribosomal protein bS6 family. As to quaternary structure, interacts with CFM3B/SPRT2 in plastids. As to expression, expressed ubiquitously in roots, leaves, stems, flower buds, flowers and siliques.

Its subcellular location is the plastid. It is found in the chloroplast. Prevents non-specific action of the splicing factor CFM3b during plastid rRNA biogenesis to improve the accuracy of plastid rRNA processing. Required for plastid functions such as photosynthesis, intracellular distribution, plastid rRNAs biosynthesis and plastid gene expression in roots. Involved in a sucrose-conditional process important for the organization of root lateral and apical meristems (e.g. establishment of RAM from pericycle and symplasmic connectivity), and subsequent primary and lateral roots development. Modulates C18 unsaturated fatty acid metabolism. This Arabidopsis thaliana (Mouse-ear cress) protein is Protein REGULATOR OF FATTY ACID COMPOSITION 3, chloroplastic.